A 199-amino-acid chain; its full sequence is Recombination protein RecR (199 aa).

Residues 57–72 (CQSCRTFTEETYCPIC) form a C4-type zinc finger. The region spanning 81–176 (DIICVVETPA…MVSRIAHGVP (96 aa)) is the Toprim domain.

Belongs to the RecR family.

In terms of biological role, may play a role in DNA repair. It seems to be involved in an RecBC-independent recombinational process of DNA repair. It may act with RecF and RecO. In Shewanella halifaxensis (strain HAW-EB4), this protein is Recombination protein RecR.